The chain runs to 386 residues: Caspase-1-A (386 aa).

The propeptide occupies 1–100 (MTAQLNKVRR…PPMAPVPIQE (100 aa)). Positions 22–88 (SDLLDDLREK…HKTLAKSLGL (67 aa)) constitute a CARD domain. Catalysis depends on residues histidine 218 and cysteine 274. The propeptide occupies 287-296 (DVASPPLEDD).

Belongs to the peptidase C14A family. As to quaternary structure, heterotetramer that consists of two anti-parallel arranged heterodimers, each one formed by a 20 kDa (Caspase-1 subunit p20) and a 10 kDa (Caspase-1 subunit p10) subunit. In terms of assembly, heterotetramer that consists of two anti-parallel arranged heterodimers, each one formed by a 20 kDa (Caspase-1 subunit p20) and a 10 kDa (Caspase-1 subunit p10) subunit. Can form a heterodimer with isoform epsilon which then has an inhibitory effect. Post-translationally, the two subunits are derived from the precursor sequence by an autocatalytic mechanism.

The protein localises to the cytoplasm. It localises to the cell membrane. It carries out the reaction Strict requirement for an Asp residue at position P1 and has a preferred cleavage sequence of Tyr-Val-Ala-Asp-|-.. Thiol protease involved in a variety of inflammatory processes by proteolytically cleaving other proteins, such as the precursors of the inflammatory cytokines interleukin-1 beta (IL1B) and interleukin 18 (IL18) as well as the pyroptosis inducer Gasdermin-D (GSDMD), into active mature peptides. Plays a key role in cell immunity as an inflammatory response initiator: once activated through formation of an inflammasome complex, it initiates a pro-inflammatory response through the cleavage of the two inflammatory cytokines IL1B and IL18, releasing the mature cytokines which are involved in a variety of inflammatory processes. Cleaves a tetrapeptide after an Asp residue at position P1. Also initiates pyroptosis, a programmed lytic cell death pathway, through cleavage of GSDMD. The protein is Caspase-1-A (casp1-a) of Xenopus laevis (African clawed frog).